We begin with the raw amino-acid sequence, 142 residues long: Large ribosomal subunit protein uL13 (142 aa).

The protein belongs to the universal ribosomal protein uL13 family. Part of the 50S ribosomal subunit.

This protein is one of the early assembly proteins of the 50S ribosomal subunit, although it is not seen to bind rRNA by itself. It is important during the early stages of 50S assembly. The polypeptide is Large ribosomal subunit protein uL13 (Psychrobacter cryohalolentis (strain ATCC BAA-1226 / DSM 17306 / VKM B-2378 / K5)).